The sequence spans 287 residues: Myoblast determination protein 1 homolog B (287 aa).

The bHLH domain maps to 96–147 (DRRRAATMRERRRLSKVNDAFETLKRCTSTNPNQRLPKVDILRNAISYIDSL). Disordered regions lie at residues 161–202 (NMEH…FYTD) and 231–277 (QSPS…QLSH). Positions 168-188 (DSDASSPSSNCSDGMNSPPCS) are enriched in low complexity. Residues 267–277 (SPGNSCTQLSH) are compositionally biased toward polar residues.

In terms of assembly, efficient DNA binding requires dimerization with another bHLH protein.

The protein localises to the nucleus. Its function is as follows. May act as a transcriptional activator that promotes transcription of muscle-specific target genes and plays a role in muscle differentiation. The polypeptide is Myoblast determination protein 1 homolog B (myod1-b) (Xenopus laevis (African clawed frog)).